The sequence spans 293 residues: Triosephosphate isomerase (293 aa).

Position 25-27 (25-27) interacts with substrate; it reads NWK. The active-site Electrophile is the His117. The active-site Proton acceptor is the Glu218.

This sequence belongs to the triosephosphate isomerase family. Homodimer.

It localises to the cytoplasm. It carries out the reaction D-glyceraldehyde 3-phosphate = dihydroxyacetone phosphate. The protein operates within carbohydrate biosynthesis; gluconeogenesis. It participates in carbohydrate degradation; glycolysis; D-glyceraldehyde 3-phosphate from glycerone phosphate: step 1/1. In terms of biological role, involved in the gluconeogenesis. Catalyzes stereospecifically the conversion of dihydroxyacetone phosphate (DHAP) to D-glyceraldehyde-3-phosphate (G3P). The chain is Triosephosphate isomerase from Tropheryma whipplei (strain TW08/27) (Whipple's bacillus).